A 385-amino-acid polypeptide reads, in one-letter code: Putative F-box protein At1g47765 (385 aa).

Residues 1–19 show a composition bias toward basic residues; it reads MEQQKQKKRKVVSKSKRTQ. Residues 1 to 24 are disordered; sequence MEQQKQKKRKVVSKSKRTQSKSAS. Residues 20–69 enclose the F-box domain; that stretch reads SKSASSLPLDLTSEILLRLPEKSIARFRCVSKLWLSITTDPYFINLFETR.

This is Putative F-box protein At1g47765 from Arabidopsis thaliana (Mouse-ear cress).